Reading from the N-terminus, the 258-residue chain is Coiled-coil domain-containing protein 107 (258 aa).

A signal peptide spans 1–24 (MASVVSLAGTLGLLLVSALPEVLG). Over residues 25 to 35 (DRRSPDRRAHP) the composition is skewed to basic and acidic residues. Residues 25–63 (DRRSPDRRAHPGDAGQVGPAAAEPRRQSPPSKNQRERAR) form a disordered region. The helical transmembrane segment at 66-86 (ALPLGALYTAAAVAFVLYKCL) threads the bilayer. Residues 106–134 (LQSEQHLAQLTQQLVQTEQHLNSLMAQLD) adopt a coiled-coil conformation. A disordered region spans residues 203-222 (EPLNWNTGTRNLTPPREMQP).

It is found in the membrane. In Bos taurus (Bovine), this protein is Coiled-coil domain-containing protein 107 (CCDC107).